The following is a 210-amino-acid chain: MELQLAIDLLNKEDAAELANKVKDYVDIVEIGTPIIYNEGLPAVKHMADNISNVKVLADMKIMDAADYEVSQAIKFGADVITILGVAEDASIKTAIEEAHKNNKQLLVDMIAVQDLEKRAKELDEMGADYIAVHTGYDLQAEGQSPLESLRTVKSVIKNSKVAVAGGIKPDTIKEIVAESPDLVIVGGGIANADDPVEAAKQCRAAIEGK.

The protein belongs to the HPS/KGPDC family. HPS subfamily.

It carries out the reaction D-ribulose 5-phosphate + formaldehyde = D-arabino-hex-3-ulose 6-phosphate. It functions in the pathway one-carbon metabolism; formaldehyde assimilation via RuMP pathway; D-fructose 6-phosphate from D-ribulose 5-phosphate and formaldehyde: step 1/2. Its function is as follows. Catalyzes the condensation of ribulose 5-phosphate with formaldehyde to form 3-hexulose 6-phosphate. In Staphylococcus aureus (strain bovine RF122 / ET3-1), this protein is 3-hexulose-6-phosphate synthase.